Here is a 448-residue protein sequence, read N- to C-terminus: Phosphoglucosamine mutase (448 aa).

The Phosphoserine intermediate role is filled by Ser100. Mg(2+)-binding residues include Ser100, Asp240, Asp242, and Asp244. Ser100 is modified (phosphoserine).

This sequence belongs to the phosphohexose mutase family. The cofactor is Mg(2+). In terms of processing, activated by phosphorylation.

The catalysed reaction is alpha-D-glucosamine 1-phosphate = D-glucosamine 6-phosphate. Its function is as follows. Catalyzes the conversion of glucosamine-6-phosphate to glucosamine-1-phosphate. The protein is Phosphoglucosamine mutase of Alkaliphilus metalliredigens (strain QYMF).